The sequence spans 454 residues: MSDNDTIVAQATPPGRGGVGILRISGLKAREVAETVLGKLPKPRYADYLPFKDADGSVLDQGIALWFPGPNSFTGEDVLELQGHGGPVILDLLLKRILTIPGLRIARPGEFSERAFLNDKLDLAQAEAIADLIDASSEQAARSALNSLQGAFSARVNHLVEALTHLRIYVEAAIDFPDEEIDFLSDGKIEAQLNDVIADLDAVRAEARQGSLLREGMKVVIAGRPNAGKSSLLNALAGREAAIVTDIAGTTRDVLREHIHIDGMPLHIIDTAGLREASDEVERIGIERAWQEIEQADRVLFMVDGTTTDAVDPAEIWSEFIARLPAKLPITVVRNKADITGETLGMSEVNGHALIRLSARTGEGVDVLRNHLKQSMGFDTNMEGGFLARRRHLQALEQAAEHLQQGKAQLLGAWAGELLAEELRLAQQNLSEITGEFTSDDLLGRIFSSFCIGK.

The (6S)-5-formyl-5,6,7,8-tetrahydrofolate site is built by Arg-23, Glu-80, and Lys-120. The 162-residue stretch at 216–377 (GMKVVIAGRP…LRNHLKQSMG (162 aa)) folds into the TrmE-type G domain. Asn-226 contacts K(+). GTP is bound by residues 226–231 (NAGKSS), 245–251 (TDIAGTT), 270–273 (DTAG), 335–338 (NKAD), and 358–360 (SAR). Residue Ser-230 participates in Mg(2+) binding. K(+)-binding residues include Thr-245, Ile-247, and Thr-250. Position 251 (Thr-251) interacts with Mg(2+). Lys-454 contacts (6S)-5-formyl-5,6,7,8-tetrahydrofolate.

It belongs to the TRAFAC class TrmE-Era-EngA-EngB-Septin-like GTPase superfamily. TrmE GTPase family. Homodimer. Heterotetramer of two MnmE and two MnmG subunits. Requires K(+) as cofactor.

The protein localises to the cytoplasm. In terms of biological role, exhibits a very high intrinsic GTPase hydrolysis rate. Involved in the addition of a carboxymethylaminomethyl (cmnm) group at the wobble position (U34) of certain tRNAs, forming tRNA-cmnm(5)s(2)U34. The sequence is that of tRNA modification GTPase MnmE from Escherichia coli O7:K1 (strain IAI39 / ExPEC).